A 615-amino-acid polypeptide reads, in one-letter code: Dihydroxy-acid dehydratase (615 aa).

Residue Asp81 participates in Mg(2+) binding. Position 122 (Cys122) interacts with [2Fe-2S] cluster. Mg(2+) contacts are provided by Asp123 and Lys124. Lys124 is subject to N6-carboxylysine. A [2Fe-2S] cluster-binding site is contributed by Cys195. Glu491 provides a ligand contact to Mg(2+). Ser517 acts as the Proton acceptor in catalysis.

This sequence belongs to the IlvD/Edd family. As to quaternary structure, homodimer. The cofactor is [2Fe-2S] cluster. Requires Mg(2+) as cofactor.

The catalysed reaction is (2R)-2,3-dihydroxy-3-methylbutanoate = 3-methyl-2-oxobutanoate + H2O. It catalyses the reaction (2R,3R)-2,3-dihydroxy-3-methylpentanoate = (S)-3-methyl-2-oxopentanoate + H2O. The protein operates within amino-acid biosynthesis; L-isoleucine biosynthesis; L-isoleucine from 2-oxobutanoate: step 3/4. Its pathway is amino-acid biosynthesis; L-valine biosynthesis; L-valine from pyruvate: step 3/4. Functions in the biosynthesis of branched-chain amino acids. Catalyzes the dehydration of (2R,3R)-2,3-dihydroxy-3-methylpentanoate (2,3-dihydroxy-3-methylvalerate) into 2-oxo-3-methylpentanoate (2-oxo-3-methylvalerate) and of (2R)-2,3-dihydroxy-3-methylbutanoate (2,3-dihydroxyisovalerate) into 2-oxo-3-methylbutanoate (2-oxoisovalerate), the penultimate precursor to L-isoleucine and L-valine, respectively. The polypeptide is Dihydroxy-acid dehydratase (Shewanella piezotolerans (strain WP3 / JCM 13877)).